A 342-amino-acid chain; its full sequence is Serpentine receptor class gamma-69 (342 aa).

Transmembrane regions (helical) follow at residues methionine 11–valine 31, serine 51–isoleucine 71, proline 106–alanine 126, leucine 140–lysine 160, isoleucine 191–leucine 211, alanine 222–phenylalanine 242, and phenylalanine 269–valine 289.

This sequence belongs to the nematode receptor-like protein srg family.

The protein localises to the membrane. The protein is Serpentine receptor class gamma-69 (srg-69) of Caenorhabditis elegans.